We begin with the raw amino-acid sequence, 189 residues long: Ras-like protein 1 (189 aa).

A GTP-binding site is contributed by 10–17 (GAGGVGKS). An Effector region motif is present at residues 32-40 (YDPTIEDSY). Residues 57–61 (DTAGQ) and 116–119 (NKCD) each bind GTP. Cysteine methyl ester is present on Cys186. Cys186 carries S-geranylgeranyl cysteine lipidation. Positions 187 to 189 (KIL) are cleaved as a propeptide — removed in mature form.

It belongs to the small GTPase superfamily. Ras family.

It localises to the cell membrane. The catalysed reaction is GTP + H2O = GDP + phosphate + H(+). Alternates between an inactive form bound to GDP and an active form bound to GTP. Activated by a guanine nucleotide-exchange factor (GEF) and inactivated by a GTPase-activating protein (GAP). Functionally, ras proteins bind GDP/GTP and possess intrinsic GTPase activity. Plays a role in eye development by regulating cell growth, survival of postmitotic ommatidial cells and differentiation of photoreceptor cells. During larval development, mediates Ptth/tor signaling leading to the production of ecdysone, a hormone required for the initiation of metamorphosis. This chain is Ras-like protein 1, found in Drosophila persimilis (Fruit fly).